The chain runs to 378 residues: Protein RecA (378 aa).

65–72 contributes to the ATP binding site; it reads GPESSGKT. The tract at residues 325 to 378 is disordered; sequence AYGMDQTGEEDDQADDKSKDKATKPSDKSQAQAKPKKPVATETSLDLDDSKTDK. Residues 339-351 are compositionally biased toward basic and acidic residues; it reads DDKSKDKATKPSD.

The protein belongs to the RecA family.

It localises to the cytoplasm. Its function is as follows. Can catalyze the hydrolysis of ATP in the presence of single-stranded DNA, the ATP-dependent uptake of single-stranded DNA by duplex DNA, and the ATP-dependent hybridization of homologous single-stranded DNAs. It interacts with LexA causing its activation and leading to its autocatalytic cleavage. The sequence is that of Protein RecA from Lactiplantibacillus pentosus (Lactobacillus pentosus).